The chain runs to 700 residues: Elongation factor G 2 (700 aa).

The tr-type G domain maps to 8 to 290 (ERYRNIGISA…AVIDFLPSPV (283 aa)). Residues 17–24 (AHIDAGKT), 88–92 (DTPGH), and 142–145 (NKMD) each bind GTP.

It belongs to the TRAFAC class translation factor GTPase superfamily. Classic translation factor GTPase family. EF-G/EF-2 subfamily.

It localises to the cytoplasm. Functionally, catalyzes the GTP-dependent ribosomal translocation step during translation elongation. During this step, the ribosome changes from the pre-translocational (PRE) to the post-translocational (POST) state as the newly formed A-site-bound peptidyl-tRNA and P-site-bound deacylated tRNA move to the P and E sites, respectively. Catalyzes the coordinated movement of the two tRNA molecules, the mRNA and conformational changes in the ribosome. This chain is Elongation factor G 2, found in Burkholderia mallei (strain ATCC 23344).